We begin with the raw amino-acid sequence, 439 residues long: C4-dicarboxylate transport protein (439 aa).

9 consecutive transmembrane segments (helical) span residues 9-29 (HLYF…YYLP), 45-65 (MIKM…IAGM), 80-100 (LYFE…INII), 150-170 (GEIL…SAMG), 186-206 (AFFG…FGAM), 221-241 (LGML…VVLG), 291-311 (VVGL…SIYL), 334-354 (ILGV…SGFV), and 357-377 (AATF…ILGI).

The protein belongs to the dicarboxylate/amino acid:cation symporter (DAACS) (TC 2.A.23) family.

The protein resides in the cell inner membrane. Functionally, responsible for the transport of dicarboxylates such as succinate, fumarate, and malate from the periplasm across the membrane. This chain is C4-dicarboxylate transport protein, found in Geobacter sp. (strain M21).